The primary structure comprises 489 residues: Ribulose bisphosphate carboxylase large chain (489 aa).

N128 and T178 together coordinate substrate. The Proton acceptor role is filled by K180. K182 provides a ligand contact to substrate. Positions 206, 208, and 209 each coordinate Mg(2+). K206 is subject to N6-carboxylysine. The Proton acceptor role is filled by H298. Residues R299, H331, and S383 each contribute to the substrate site.

Belongs to the RuBisCO large chain family. Type I subfamily. In terms of assembly, heterohexadecamer of 8 large chains and 8 small chains. Mg(2+) serves as cofactor.

The enzyme catalyses 2 (2R)-3-phosphoglycerate + 2 H(+) = D-ribulose 1,5-bisphosphate + CO2 + H2O. It carries out the reaction D-ribulose 1,5-bisphosphate + O2 = 2-phosphoglycolate + (2R)-3-phosphoglycerate + 2 H(+). RuBisCO catalyzes two reactions: the carboxylation of D-ribulose 1,5-bisphosphate, the primary event in carbon dioxide fixation, as well as the oxidative fragmentation of the pentose substrate. Both reactions occur simultaneously and in competition at the same active site. The polypeptide is Ribulose bisphosphate carboxylase large chain (Nitrosospira multiformis (strain ATCC 25196 / NCIMB 11849 / C 71)).